We begin with the raw amino-acid sequence, 183 residues long: PLAT domain-containing protein 2 (183 aa).

Residues 1-25 (MMPRRDVLFLSLLLVIATVSAVALA) form the signal peptide. Residues 31–158 (CVYTFFLRTG…SPYELSAVRN (128 aa)) form the PLAT domain.

The protein localises to the endoplasmic reticulum. In terms of biological role, involved in response to abiotic stress. This Arabidopsis thaliana (Mouse-ear cress) protein is PLAT domain-containing protein 2.